Consider the following 207-residue polypeptide: Ras-related protein Rab-8B (207 aa).

Positions 17, 18, 19, 20, 21, 22, 23, 35, 39, and 40 each coordinate GTP. Thr22 provides a ligand contact to Mg(2+). 2 consecutive short sequence motifs (switch) follow at residues 31-45 and 63-80; these read DAFNTTFISTIGIDF and DTAGQERFRTITTAYYRG. Residues Thr40 and Asp63 each contribute to the Mg(2+) site. Gly66 lines the GTP pocket. Thr72 carries the post-translational modification Phosphothreonine; by LRRK2. GTP contacts are provided by Asn121, Lys122, Asp124, Ala152, and Lys153. Ser180 bears the Phosphoserine mark. At Cys204 the chain carries Cysteine methyl ester. Cys204 carries the S-geranylgeranyl cysteine lipid modification. Positions 205-207 are cleaved as a propeptide — removed in mature form; sequence SLL.

Belongs to the small GTPase superfamily. Rab family. Associated with actin, delta-catenin and alpha and beta tubulins. Interacts with OTOF. Interacts with PEX5R. Interacts with RAB3IP. Interacts with VIM. Interacts with CDH1. Interacts with MICALL2. Interacts with GDI1, GDI2, CHML and CHM; phosphorylation at Thr-72 disrupts these interactions. Interacts with MICAL1. Mg(2+) is required as a cofactor. Phosphorylation of Thr-72 in the switch II region by LRRK2 prevents the association of RAB regulatory proteins, including CHM, CHML and RAB GDP dissociation inhibitors GDI1 and GDI2.

It is found in the cell membrane. It localises to the cytoplasmic vesicle. The protein resides in the phagosome. Its subcellular location is the phagosome membrane. The protein localises to the endosome membrane. The enzyme catalyses GTP + H2O = GDP + phosphate + H(+). With respect to regulation, regulated by guanine nucleotide exchange factors (GEFs) including RAB3IP/RABIN8 which promotes the exchange of bound GDP for free GTP. Regulated by GTPase activating proteins (GAPs) which increase the GTP hydrolysis activity. Inhibited by GDP dissociation inhibitors (GDIs). In terms of biological role, the small GTPases Rab are key regulators of intracellular membrane trafficking, from the formation of transport vesicles to their fusion with membranes. Rabs cycle between an inactive GDP-bound form and an active GTP-bound form that is able to recruit to membranes different sets of downstream effectors directly responsible for vesicle formation, movement, tethering and fusion. RAB8B may be involved in polarized vesicular trafficking and neurotransmitter release. May participate in cell junction dynamics in Sertoli cells. May also participate in the export of a subset of neosynthesized proteins through a Rab8-Rab10-Rab11-dependent endososomal export route. The sequence is that of Ras-related protein Rab-8B from Homo sapiens (Human).